A 315-amino-acid chain; its full sequence is Eukaryotic translation initiation factor 2 subunit 1 (315 aa).

The S1 motif domain occupies 17 to 88; the sequence is EDVVMVNVRS…EKGYIDLSKR (72 aa). A Phosphoserine; by HRI modification is found at serine 49. The residue at position 52 (serine 52) is a Phosphoserine. Lysine 141 is subject to N6-acetyllysine. The residue at position 158 (serine 158) is a Phosphoserine. Phosphothreonine occurs at positions 279 and 281. Positions 293-315 are disordered; the sequence is LERENAEVDGDDDAEEMEAKAED. A compositionally biased stretch (acidic residues) spans 299–308; it reads EVDGDDDAEE.

Belongs to the eIF-2-alpha family. Eukaryotic translation initiation factor 2 eIF2 is a heterotrimeric complex composed of an alpha (EIF2S1), a beta (EIF2S2) and a gamma (EIF2S3) chain. eIF2 is member of the 43S pre-initiation complex (43S PIC). eIF2 forms a complex with at least CELF1/CUGBP1, CALR, CALR3, EIF2S1, EIF2S2, HSP90B1 and HSPA5. Interaction with METAP2 protects EIF2S1 from inhibitory phosphorylation. Interacts with ABCF1 isoform 2. Associates with ribosomes. Interacts with DDX3X in an RNA-independent manner. Interacts with CDC123. In terms of assembly, (Microbial infection) Interacts with rotavirus A non-structural protein 2; this interaction probably plays a role in the sequestration of IF2A in viral factories. Interacts with rotavirus A non-structural protein 5; this interaction probably plays a role in its sequestration in viral factories. Phosphorylation at Ser-49 and Ser-52 stabilizes the eIF-2/GDP/eIF2B complex and prevents GDP/GTP exchange reaction, thus impairing the recycling of eIF-2 between successive rounds of initiation and leading to global inhibition of translation, while concomitantly initiating the preferential translation of integrated stress response (ISR)-specific mRNAs. Substrate for at least 4 kinases: EIF2AK1/HRI, EIF2AK2/PKR, EIF2AK3/PERK and EIF2AK4/GCN2. Phosphorylation on Ser-52 by the EIF2AK4/GCN2 protein kinase occurs in response to amino acid starvation and UV irradiation. Phosphorylation at Ser-52 by the EIF2AK3/PERK protein kinase occurs in response to the unfolded protein response. Phosphorylation at Ser-52 by EIF2AK1/HRI in response to mitochondrial damage promotes relocalization to the mitochondrial surface. In terms of processing, (Microbial infection) Phosphorylation by vaccinia virus protein E3 and rotavirus A stabilizes the eIF-2/GDP/eIF2B complex and prevents GDP/GTP exchange reaction, thus impairing the recycling of eIF-2 between successive rounds of initiation and leading to global inhibition of translation.

It localises to the cytoplasm. The protein localises to the stress granule. Its subcellular location is the cytosol. The protein resides in the mitochondrion. With respect to regulation, activity is regulated by phosphorylation at Ser-49 and Ser-52, which stabilizes the eIF2/GDP/eIF2B complex and prevents the eIF2B-mediated exchange of GDP for GTP, thereby preventing the formation of the 43S pre-initiation complex (43S PIC). This results in the global attenuation of 5' cap-dependent protein synthesis and concomitant translation of ISR-specific mRNAs that contain a short upstream open reading frame (uORF) in their 5' UTR, such as ATF4, ATF5, DDIT3/CHOP and PPP1R15A/GADD34. In terms of biological role, member of the eIF2 complex that functions in the early steps of protein synthesis by forming a ternary complex with GTP and initiator tRNA. This complex binds to a 40S ribosomal subunit, followed by mRNA binding to form a 43S pre-initiation complex (43S PIC). Junction of the 60S ribosomal subunit to form the 80S initiation complex is preceded by hydrolysis of the GTP bound to eIF2 and release of an eIF2-GDP binary complex. In order for eIF2 to recycle and catalyze another round of initiation, the GDP bound to eIF2 must exchange with GTP by way of a reaction catalyzed by eIF2B. EIF2S1/eIF2-alpha is a key component of the integrated stress response (ISR), required for adaptation to various stress: phosphorylation by metabolic-stress sensing protein kinases (EIF2AK1/HRI, EIF2AK2/PKR, EIF2AK3/PERK and EIF2AK4/GCN2) in response to stress converts EIF2S1/eIF2-alpha in a global protein synthesis inhibitor, leading to an attenuation of cap-dependent translation, while concomitantly initiating the preferential translation of ISR-specific mRNAs, such as the transcriptional activators ATF4 and QRICH1, and hence allowing ATF4- and QRICH1-mediated reprogramming. EIF2S1/eIF2-alpha also acts as an activator of mitophagy in response to mitochondrial damage: phosphorylation by EIF2AK1/HRI promotes relocalization to the mitochondrial surface, thereby triggering PRKN-independent mitophagy. This Homo sapiens (Human) protein is Eukaryotic translation initiation factor 2 subunit 1.